We begin with the raw amino-acid sequence, 831 residues long: Zinc phosphodiesterase ELAC protein 2 (831 aa).

A mitochondrion-targeting transit peptide spans 1-16 (MWALRSLLRPLGLRTM). Disordered stretches follow at residues 15–47 (TMSQGSARRPRPSKDPLRHLRTREKRGPGPGGP) and 179–227 (SERR…ANRK). The span at 186 to 212 (QQPSQSPRTSPNRLSPKQSSDSGSAEN) shows a compositional bias: polar residues. Phosphoserine occurs at positions 191, 195, 200, 204, and 732. Residues 791–831 (LTQQADSPEDREPQQKRAHTDEPHSPQSKKESVANTLGARV) form a disordered region. Threonine 792 carries the phosphothreonine modification. Phosphoserine occurs at positions 797 and 815. Basic and acidic residues predominate over residues 798 to 822 (PEDREPQQKRAHTDEPHSPQSKKES).

Belongs to the RNase Z family. In terms of assembly, homodimer. Interacts with PTCD1. Requires Zn(2+) as cofactor.

Its subcellular location is the mitochondrion. The protein resides in the mitochondrion matrix. It is found in the mitochondrion nucleoid. It localises to the nucleus. The enzyme catalyses Endonucleolytic cleavage of RNA, removing extra 3' nucleotides from tRNA precursor, generating 3' termini of tRNAs. A 3'-hydroxy group is left at the tRNA terminus and a 5'-phosphoryl group is left at the trailer molecule.. Its function is as follows. Zinc phosphodiesterase, which displays mitochondrial tRNA 3'-processing endonuclease activity. Involved in tRNA maturation, by removing a 3'-trailer from precursor tRNA. Associates with mitochondrial DNA complexes at the nucleoids to initiate RNA processing and ribosome assembly. This chain is Zinc phosphodiesterase ELAC protein 2 (Elac2), found in Mus musculus (Mouse).